The chain runs to 332 residues: Aspartate carbamoyltransferase catalytic subunit (332 aa).

Positions 78 and 79 each coordinate carbamoyl phosphate. Lys-106 serves as a coordination point for L-aspartate. Carbamoyl phosphate-binding residues include Arg-128, His-156, and Gln-159. L-aspartate-binding residues include Arg-189 and Arg-243. Carbamoyl phosphate-binding residues include Gly-284 and Pro-285.

Belongs to the aspartate/ornithine carbamoyltransferase superfamily. ATCase family. Heterododecamer (2C3:3R2) of six catalytic PyrB chains organized as two trimers (C3), and six regulatory PyrI chains organized as three dimers (R2).

The catalysed reaction is carbamoyl phosphate + L-aspartate = N-carbamoyl-L-aspartate + phosphate + H(+). Its pathway is pyrimidine metabolism; UMP biosynthesis via de novo pathway; (S)-dihydroorotate from bicarbonate: step 2/3. Its function is as follows. Catalyzes the condensation of carbamoyl phosphate and aspartate to form carbamoyl aspartate and inorganic phosphate, the committed step in the de novo pyrimidine nucleotide biosynthesis pathway. This chain is Aspartate carbamoyltransferase catalytic subunit, found in Caulobacter vibrioides (strain ATCC 19089 / CIP 103742 / CB 15) (Caulobacter crescentus).